The following is a 1418-amino-acid chain: Alpha-latrotoxin-Lhe1a (1418 aa).

The first 20 residues, Met-1 to Arg-20, serve as a signal peptide directing secretion. The tract at residues Arg-17–Arg-20 is furin-like endopeptidase recognition region. The segment at Val-238–Leu-257 is helix H8 is the probable transmembrane region of the tetrameric pore inserted in the target cell membrane. Residues Cys-413 and Cys-1066 are joined by a disulfide bond. ANK repeat units follow at residues Leu-458–Asp-489, Gln-490–Gln-521, Lys-525–Ser-554, Phe-559–Glu-589, Asp-593–Ala-622, Lys-626–Ala-656, Asn-660–Val-690, Gly-695–Val-723, Gly-729–Gln-758, Glu-762–Ala-791, Ser-795–Asp-824, Asn-828–Asp-857, Asn-862–Thr-891, Asn-895–Ile-924, Asn-928–Trp-957, Glu-971–Asn-1003, Ile-1004–Gly-1033, Lys-1035–His-1064, Asn-1068–Arg-1097, Arg-1101–Ile-1131, Asp-1137–Ile-1166, and Tyr-1170–Arg-1199. The segment at Glu-1026–Asp-1032 is 4C4.1 epitope. The tract at residues Lys-1196 to Arg-1199 is furin-like endopeptidase recognition region. Residues Glu-1200–Ile-1418 constitute a propeptide that is removed on maturation.

The protein belongs to the cationic peptide 01 (latrotoxin) family. 03 (alpha-latrotoxin) subfamily. As to quaternary structure, homotetramer in membranes. In terms of processing, processed by furin-like proteases at both the N- and C-termini. As to expression, expressed in venom gland, cephalothorax, and abdomen tissues from both males and females.

The protein localises to the secreted. It is found in the target cell membrane. Its function is as follows. Presynaptic neurotoxin that causes massive release of neurotransmitters from vertebrate (but not invertebrate) nerve terminals and endocrine cells via a complex mechanism involving activation of receptor(s) and toxin insertion into the plasma membrane with subsequent pore formation. Binds to neurexin-1-alpha (NRXN1) in a calcium dependent manner, adhesion G protein-coupled receptor L1 (ADGRL1, also termed latrophilin-1 and calcium-independent receptor of latrotoxin (CIRL)), and receptor-type tyrosine-protein phosphatase S (PTPRS), also termed PTP sigma. NRXN1 and PTPRS are suggested to provide a platform for binding and subsequent pore formation events. In contrast, binding to ADGRL1 does not involve oligomerization and channel formation, but direct downstream stimulation of the synaptic fusion machinery. The protein is Alpha-latrotoxin-Lhe1a of Latrodectus hesperus (Western black widow spider).